The chain runs to 166 residues: Lithostathine-1-alpha (166 aa).

A signal peptide spans 1–22 (MAQTSSYFMLISCLMFLSQSQG). Q23 bears the Pyrrolidone carboxylic acid mark. An O-linked (GalNAc) threonine glycan is attached at T27. In terms of domain architecture, C-type lectin spans 34–164 (ISCPEGTNAY…EDKFSFVCKF (131 aa)). 3 cysteine pairs are disulfide-bonded: C36–C47, C64–C162, and C137–C154.

The composition of the O-linked carbohydrate on Thr-27 is complex and varied. In the crystallographic structure, the attached sugar appears to be N-acetylglucosamine, typical of an intracellular protein, rather than N-acetylgalactosamine. In terms of tissue distribution, in pancreatic acinar cells and, in lower levels, in brain. Enhanced expression of PSP-related transcripts and intraneuronal accumulation of PSP-like proteins is found in brain from Alzheimer disease and Down syndrome patients.

The protein resides in the secreted. Might act as an inhibitor of spontaneous calcium carbonate precipitation. May be associated with neuronal sprouting in brain, and with brain and pancreas regeneration. The polypeptide is Lithostathine-1-alpha (REG1A) (Homo sapiens (Human)).